The primary structure comprises 313 residues: Glutathione synthetase (313 aa).

One can recognise an ATP-grasp domain in the interval 125–309 (KIFVTEFADL…IASLFWDAVE (185 aa)). 151 to 207 (RKEFGDIIVKPLYGNGGAGIFHLHEADRNLASLLEMFGQLFREPYIVQRYLKDVRKG) serves as a coordination point for ATP. 2 residues coordinate Mg(2+): glutamate 280 and asparagine 282.

This sequence belongs to the prokaryotic GSH synthase family. Requires Mg(2+) as cofactor. The cofactor is Mn(2+).

The enzyme catalyses gamma-L-glutamyl-L-cysteine + glycine + ATP = glutathione + ADP + phosphate + H(+). It functions in the pathway sulfur metabolism; glutathione biosynthesis; glutathione from L-cysteine and L-glutamate: step 2/2. This Mesorhizobium japonicum (strain LMG 29417 / CECT 9101 / MAFF 303099) (Mesorhizobium loti (strain MAFF 303099)) protein is Glutathione synthetase.